We begin with the raw amino-acid sequence, 377 residues long: Spermidine/putrescine import ATP-binding protein PotA (377 aa).

Positions 18 to 248 (IRLSGISKSF…PKNLFVARFI (231 aa)) constitute an ABC transporter domain. Residue 50–57 (GPSGCGKT) coordinates ATP.

The protein belongs to the ABC transporter superfamily. Spermidine/putrescine importer (TC 3.A.1.11.1) family. The complex is composed of two ATP-binding proteins (PotA), two transmembrane proteins (PotB and PotC) and a solute-binding protein (PotD).

It is found in the cell inner membrane. It catalyses the reaction ATP + H2O + polyamine-[polyamine-binding protein]Side 1 = ADP + phosphate + polyamineSide 2 + [polyamine-binding protein]Side 1.. Functionally, part of the ABC transporter complex PotABCD involved in spermidine/putrescine import. Responsible for energy coupling to the transport system. The protein is Spermidine/putrescine import ATP-binding protein PotA of Vibrio vulnificus (strain CMCP6).